Here is a 338-residue protein sequence, read N- to C-terminus: MNVCTFTLVLALVGSVSGQYYDYDAPLFMYGELSPNCAPECNCPHSYPTAMYCDDLKLKSVPMVPPGIKYLYLRNNQIDHIDEKAFENVTDLQWLILDHNLLENSKIKGKVFSKLKQLKKLHINYNNLTESVGPLPKSLQDLQLANNKISKLGSFDGLVNLTFIYLQHNQLKEEAVSASLKGLKSLEYLDLSFNQMSKLPAGLPTSLLTLYLDNNKITNIPDEYFNRFTGLQYLRLSHNELADSGVPGNSFNISSLLELDLSYNKLKSIPTVNENLENYYLEVNKLEKFDVKSFCKILGPLSYSKIKHLRLDGNPLTQSSLPPDMYECLRVANEITVN.

The N-terminal stretch at 1–18 (MNVCTFTLVLALVGSVSG) is a signal peptide. Position 19 is a pyrrolidone carboxylic acid (Q19). Sulfotyrosine is present on residues Y20, Y21, Y23, and Y30. An LRRNT domain is found at 28–66 (FMYGELSPNCAPECNCPHSYPTAMYCDDLKLKSVPMVPP). LRR repeat units follow at residues 67-88 (GIKYLYLRNNQIDHIDEKAFEN), 91-114 (DLQWLILDHNLLENSKIKGKVFSK), 117-137 (QLKKLHINYNNLTESVGPLPK), 138-159 (SLQDLQLANNKISKLGSFDGLV), 160-181 (NLTFIYLQHNQLKEEAVSASLK), 185-205 (SLEYLDLSFNQMSKLPAGLPT), 206-227 (SLLTLYLDNNKITNIPDEYFNR), and 230-250 (GLQYLRLSHNELADSGVPGNS). N88 carries an N-linked (GlcNAc...) (keratan sulfate) asparagine glycan. N127 carries N-linked (GlcNAc...) (keratan sulfate) asparagine glycosylation. Residue N160 is glycosylated (N-linked (GlcNAc...) (keratan sulfate) asparagine). N252 carries an N-linked (GlcNAc...) (keratan sulfate) asparagine glycan. LRR repeat units follow at residues 255–276 (SLLELDLSYNKLKSIPTVNENL) and 277–296 (ENYYLEVNKLEKFDVKSFCK). C295 and C328 are oxidised to a cystine. S304 bears the Phosphoserine mark. Residues 305–326 (KIKHLRLDGNPLTQSSLPPDMY) form an LRR 11 repeat.

This sequence belongs to the small leucine-rich proteoglycan (SLRP) family. SLRP class II subfamily. Binds to laminin. In terms of processing, contains keratan sulfate.

The protein resides in the secreted. The protein localises to the extracellular space. It localises to the extracellular matrix. The polypeptide is Lumican (Lum) (Rattus norvegicus (Rat)).